We begin with the raw amino-acid sequence, 454 residues long: Tumor necrosis factor receptor superfamily member 1A (454 aa).

The signal sequence occupies residues 1 to 29 (MGLPTVPGLLLSLVLLALLMGIHPSGVTG). Residues 30–212 (LVPSLGDREK…VTNPQDSGTA (183 aa)) are Extracellular-facing. TNFR-Cys repeat units lie at residues 43-82 (LCPQ…TVCR), 83-125 (ECEK…DTVC), 126-166 (GCKE…NTVC), and 167-196 (NCHA…KLCL). Disulfide bonds link Cys44-Cys58, Cys59-Cys72, Cys62-Cys81, Cys84-Cys99, Cys102-Cys117, Cys105-Cys125, Cys127-Cys143, Cys146-Cys158, Cys149-Cys166, Cys168-Cys179, Cys182-Cys195, and Cys185-Cys191. Asn54 carries an N-linked (GlcNAc...) asparagine glycan. N-linked (GlcNAc...) asparagine glycosylation is present at Asn151. N-linked (GlcNAc...) asparagine glycosylation is present at Asn202. Residues 213–235 (VLLPLVILLGLCLLSFIFISLMC) form a helical membrane-spanning segment. At 236-454 (RYPRWRPEVY…APSSTTRLPR (219 aa)) the chain is on the cytoplasmic side. The N-SMase activation domain (NSD) stretch occupies residues 339–349 (VQKWEDSAHPQ). A Death domain is found at 356 to 441 (LAILYAVVDG…GCLENILEAL (86 aa)). Arg376 carries (Microbial infection) N-beta-linked (GlcNAc) arginine glycosylation.

Binding of TNF to the extracellular domain leads to homotrimerization. The aggregated death domains provide a novel molecular interface that interacts specifically with the death domain of TRADD. Various TRADD-interacting proteins such as TRAFS, RIPK1 and possibly FADD, are recruited to the complex by their association with TRADD. This complex activates at least two distinct signaling cascades, apoptosis and NF-kappa-B signaling. Interacts with BAG4, BABAM2, FEM1B, GRB2, SQSTM1 and TRPC4AP. Interacts with DAB2IP. Interacts directly with NOL3 (via CARD domain); inhibits TNF-signaling pathway. Interacts with SH3RF2, TRADD and RIPK1. SH3RF2 facilitates the recruitment of RIPK1 and TRADD to TNFRSF1A in a TNF-alpha-dependent process. Interacts with PGLYRP1; this interaction is important for cell death induction. Interacts (via death domain) with MADD (via death domain). In terms of processing, (Microbial infection) Glycosylated at Arg-376 by S.typhimurium protein Ssek3: arginine GlcNAcylation prevents homotypic/heterotypic death domain interactions.

The protein localises to the cell membrane. It is found in the golgi apparatus membrane. Functionally, receptor for TNFSF2/TNF-alpha and homotrimeric TNFSF1/lymphotoxin-alpha. The adapter molecule FADD recruits caspase-8 to the activated receptor. The resulting death-inducing signaling complex (DISC) performs caspase-8 proteolytic activation which initiates the subsequent cascade of caspases (aspartate-specific cysteine proteases) mediating apoptosis. This Mus musculus (Mouse) protein is Tumor necrosis factor receptor superfamily member 1A (Tnfrsf1a).